The primary structure comprises 95 residues: Co-chaperonin GroES (95 aa).

It belongs to the GroES chaperonin family. Heptamer of 7 subunits arranged in a ring. Interacts with the chaperonin GroEL.

The protein localises to the cytoplasm. Functionally, together with the chaperonin GroEL, plays an essential role in assisting protein folding. The GroEL-GroES system forms a nano-cage that allows encapsulation of the non-native substrate proteins and provides a physical environment optimized to promote and accelerate protein folding. GroES binds to the apical surface of the GroEL ring, thereby capping the opening of the GroEL channel. The chain is Co-chaperonin GroES from Rickettsia canadensis (strain McKiel).